The chain runs to 459 residues: Interleukin-1 receptor-associated kinase 4 (459 aa).

The residue at position 1 (methionine 1) is an N-acetylmethionine. Residues arginine 20–alanine 104 enclose the Death domain. Lysine 34 carries the post-translational modification N6-acetyllysine. Positions arginine 115–serine 161 are disordered. The 269-residue stretch at serine 186–leucine 454 folds into the Protein kinase domain. Residues methionine 192–valine 200 and lysine 213 contribute to the ATP site. Aspartate 311 functions as the Proton acceptor in the catalytic mechanism. ATP-binding positions include lysine 313 to asparagine 316 and aspartate 329. Residues threonine 342 and threonine 345 each carry the phosphothreonine modification. Serine 346 is modified (phosphoserine).

It belongs to the protein kinase superfamily. TKL Ser/Thr protein kinase family. Pelle subfamily. Associates with MYD88 and IRAK2 to form a ternary complex called the Myddosome. Once phosphorylated, IRAK4 dissociates from the receptor complex and then associates with the TNF receptor-associated factor 6 (TRAF6), IRAK1, and PELI1; this intermediate complex is required for subsequent NF-kappa-B activation. Direct binding of SMAD6 to PELI1 prevents complex formation and hence negatively regulates IL1R-TLR signaling and eventually NF-kappa-B-mediated gene expression. Interacts with IL1RL1. Interacts (when phosphorylated) with IRAK1. May interact (when phosphorylated) with IRAK3. Requires Mg(2+) as cofactor. In terms of processing, phosphorylated.

It is found in the cytoplasm. The catalysed reaction is L-seryl-[protein] + ATP = O-phospho-L-seryl-[protein] + ADP + H(+). It catalyses the reaction L-threonyl-[protein] + ATP = O-phospho-L-threonyl-[protein] + ADP + H(+). Serine/threonine-protein kinase that plays a critical role in initiating innate immune response against foreign pathogens. Involved in Toll-like receptor (TLR) and IL-1R signaling pathways. Is rapidly recruited by MYD88 to the receptor-signaling complex upon TLR activation to form the Myddosome together with IRAK2. Phosphorylates initially IRAK1, thus stimulating the kinase activity and intensive autophosphorylation of IRAK1. Phosphorylates E3 ubiquitin ligases Pellino proteins (PELI1, PELI2 and PELI3) to promote pellino-mediated polyubiquitination of IRAK1. Then, the ubiquitin-binding domain of IKBKG/NEMO binds to polyubiquitinated IRAK1 bringing together the IRAK1-MAP3K7/TAK1-TRAF6 complex and the NEMO-IKKA-IKKB complex. In turn, MAP3K7/TAK1 activates IKKs (CHUK/IKKA and IKBKB/IKKB) leading to NF-kappa-B nuclear translocation and activation. Alternatively, phosphorylates TIRAP to promote its ubiquitination and subsequent degradation. Phosphorylates NCF1 and regulates NADPH oxidase activation after LPS stimulation suggesting a similar mechanism during microbial infections. This is Interleukin-1 receptor-associated kinase 4 (Irak4) from Mus musculus (Mouse).